Here is a 119-residue protein sequence, read N- to C-terminus: Large ribosomal subunit protein uL18 (119 aa).

The protein belongs to the universal ribosomal protein uL18 family. In terms of assembly, part of the 50S ribosomal subunit; part of the 5S rRNA/L5/L18/L25 subcomplex. Contacts the 5S and 23S rRNAs.

This is one of the proteins that bind and probably mediate the attachment of the 5S RNA into the large ribosomal subunit, where it forms part of the central protuberance. This Ruegeria pomeroyi (strain ATCC 700808 / DSM 15171 / DSS-3) (Silicibacter pomeroyi) protein is Large ribosomal subunit protein uL18.